Consider the following 84-residue polypeptide: Transcriptional regulator WhiB1 (84 aa).

The 4Fe-4S Wbl-type domain occupies 8–70 (VCRDEDPELF…GGMSEDERRA (63 aa)). Positions 9, 37, 40, and 46 each coordinate [4Fe-4S] cluster.

Belongs to the WhiB family. As to quaternary structure, homodimer. [4Fe-4S] cluster is required as a cofactor. Post-translationally, the Fe-S cluster can be nitrosylated by nitric oxide (NO). Upon Fe-S cluster removal intramolecular disulfide bonds are formed.

Its subcellular location is the cytoplasm. In terms of biological role, acts as a transcriptional regulator. Probably redox-responsive. The apo- but not holo-form probably binds DNA. This is Transcriptional regulator WhiB1 (whiB1) from Mycobacterium tuberculosis (strain CDC 1551 / Oshkosh).